The chain runs to 30 residues: Hementerin (30 aa).

Ca(2+) is required as a cofactor.

The protein localises to the secreted. Its activity is regulated as follows. Fibrino(geno)lytic activity inhibited by EDTA but not by PMSF, E-64, 6-AHA and aprotinin. Cleaves fibrinogen Aalpha (FGA), gamma (FGG) and Bbeta (FGB) chains. Degrades cross-linked fibrin. Has no amidolytic, plasminogenolytic or caseinolytic activity. Inhibits platelet aggregation induced by collagen (IC(50)=7.5ug/ml) and various other agonists, presumably via activation of a nitridergic pathway. Inhibition is accompanied by reduced ATP release from and surface expression of SELP and CD63 on platelets as well as increased intracellular levels of Ca(2+), cGMP and nitric oxide synthase activity. This is Hementerin from Haementeria depressa (Leech).